The primary structure comprises 99 residues: Signal recognition particle 19 kDa protein (99 aa).

It belongs to the SRP19 family. Part of the signal recognition particle protein translocation system, which is composed of SRP and FtsY. Archaeal SRP consists of a 7S RNA molecule of 300 nucleotides and two protein subunits: SRP54 and SRP19.

The protein localises to the cytoplasm. Involved in targeting and insertion of nascent membrane proteins into the cytoplasmic membrane. Binds directly to 7S RNA and mediates binding of the 54 kDa subunit of the SRP. This is Signal recognition particle 19 kDa protein from Ignicoccus hospitalis (strain KIN4/I / DSM 18386 / JCM 14125).